We begin with the raw amino-acid sequence, 366 residues long: UDP-N-acetylenolpyruvoylglucosamine reductase (366 aa).

The FAD-binding PCMH-type domain occupies 29-203; it reads VGPVARTLVT…LEVEFALDAS (175 aa). Arg-177 is a catalytic residue. The Proton donor role is filled by Ser-258. The active site involves Glu-358.

Belongs to the MurB family. FAD serves as cofactor.

The protein localises to the cytoplasm. It carries out the reaction UDP-N-acetyl-alpha-D-muramate + NADP(+) = UDP-N-acetyl-3-O-(1-carboxyvinyl)-alpha-D-glucosamine + NADPH + H(+). The protein operates within cell wall biogenesis; peptidoglycan biosynthesis. Its function is as follows. Cell wall formation. This is UDP-N-acetylenolpyruvoylglucosamine reductase from Mycobacterium ulcerans (strain Agy99).